Here is an 833-residue protein sequence, read N- to C-terminus: Homeobox-leucine zipper protein ATHB-8 (833 aa).

The homeobox DNA-binding region spans 12-75 (DNGKYVRYTP…NRRCREKQRK (64 aa)). Residues 70–108 (REKQRKEASRLQAVNRKLTAMNKLLMEENDRLQKQVSHL) adopt a coiled-coil conformation. In terms of domain architecture, START spans 150–378 (RDASPAGLLS…ISQEISQPNV (229 aa)).

It belongs to the HD-ZIP homeobox family. Class III subfamily. In terms of assembly, interacts with ESR1 and ESR2. Interacts with ZPR3.

The protein localises to the nucleus. In terms of biological role, probable transcription factor involved in the regulation of vascular development. May promote differentiation of precambial and cambial cells. The protein is Homeobox-leucine zipper protein ATHB-8 (ATHB-8) of Arabidopsis thaliana (Mouse-ear cress).